A 641-amino-acid chain; its full sequence is Isomalto-dextranase (641 aa).

Residues 1–39 (MMNLSRRTLLTTGSAATLAYALGMAGSAQAATAVTARPG) constitute a signal peptide (tat-type signal). D227 (nucleophile) is an active-site residue. Catalysis depends on D288, which acts as the Proton donor. The 141-residue stretch at 500 to 640 (TRYPAAFAAW…AINLNWIELD (141 aa)) folds into the CBM6 domain. Residues 556 to 588 (SGYRYANATDDNTTSKTTTKKANPEKADRSTVD) form a disordered region. Positions 561-576 (ANATDDNTTSKTTTKK) are enriched in low complexity. Positions 577-586 (ANPEKADRST) are enriched in basic and acidic residues.

The protein belongs to the glycosyl hydrolase 27 family. In terms of processing, predicted to be exported by the Tat system. The position of the signal peptide cleavage has been experimentally proven.

The protein localises to the secreted. It catalyses the reaction Hydrolysis of (1-&gt;6)-alpha-D-glucosidic linkages in polysaccharides, to remove successive isomaltose units from the non-reducing ends of the chains.. This chain is Isomalto-dextranase (imd), found in Arthrobacter globiformis.